We begin with the raw amino-acid sequence, 142 residues long: Large ribosomal subunit protein uL13 (142 aa).

This sequence belongs to the universal ribosomal protein uL13 family. Part of the 50S ribosomal subunit.

Functionally, this protein is one of the early assembly proteins of the 50S ribosomal subunit, although it is not seen to bind rRNA by itself. It is important during the early stages of 50S assembly. In Treponema denticola (strain ATCC 35405 / DSM 14222 / CIP 103919 / JCM 8153 / KCTC 15104), this protein is Large ribosomal subunit protein uL13.